The following is a 100-amino-acid chain: Aspartyl/glutamyl-tRNA(Asn/Gln) amidotransferase subunit C (100 aa).

The protein belongs to the GatC family. As to quaternary structure, heterotrimer of A, B and C subunits.

The catalysed reaction is L-glutamyl-tRNA(Gln) + L-glutamine + ATP + H2O = L-glutaminyl-tRNA(Gln) + L-glutamate + ADP + phosphate + H(+). The enzyme catalyses L-aspartyl-tRNA(Asn) + L-glutamine + ATP + H2O = L-asparaginyl-tRNA(Asn) + L-glutamate + ADP + phosphate + 2 H(+). Its function is as follows. Allows the formation of correctly charged Asn-tRNA(Asn) or Gln-tRNA(Gln) through the transamidation of misacylated Asp-tRNA(Asn) or Glu-tRNA(Gln) in organisms which lack either or both of asparaginyl-tRNA or glutaminyl-tRNA synthetases. The reaction takes place in the presence of glutamine and ATP through an activated phospho-Asp-tRNA(Asn) or phospho-Glu-tRNA(Gln). The polypeptide is Aspartyl/glutamyl-tRNA(Asn/Gln) amidotransferase subunit C (Rickettsia bellii (strain OSU 85-389)).